Consider the following 593-residue polypeptide: Aspartate--tRNA ligase (593 aa).

Glutamate 180 is a binding site for L-aspartate. An aspartate region spans residues glutamine 204 to lysine 207. Arginine 226 provides a ligand contact to L-aspartate. Residues arginine 226–glutamate 228 and glutamine 235 contribute to the ATP site. Histidine 453 lines the L-aspartate pocket. Position 487 (glutamate 487) interacts with ATP. Arginine 494 is a binding site for L-aspartate. Glycine 539–arginine 542 contacts ATP.

It belongs to the class-II aminoacyl-tRNA synthetase family. Type 1 subfamily. As to quaternary structure, homodimer.

Its subcellular location is the cytoplasm. The enzyme catalyses tRNA(Asp) + L-aspartate + ATP = L-aspartyl-tRNA(Asp) + AMP + diphosphate. Functionally, catalyzes the attachment of L-aspartate to tRNA(Asp) in a two-step reaction: L-aspartate is first activated by ATP to form Asp-AMP and then transferred to the acceptor end of tRNA(Asp). This Clostridium botulinum (strain ATCC 19397 / Type A) protein is Aspartate--tRNA ligase.